The sequence spans 452 residues: Elongation factor Tu, mitochondrial (452 aa).

Residues 1–43 (MAAATLLRATPRFSGLCASPTPFLQGRLRPLKAPASPFLCRGL) constitute a mitochondrion transit peptide. In terms of domain architecture, tr-type G spans 55 to 251 (KPHVNVGTIG…AVDTYIPVPT (197 aa)). Residues 64-71 (GHVDHGKT) form a G1 region. Aspartate 67, glycine 69, lysine 70, threonine 71, and threonine 72 together coordinate GTP. Threonine 71 contacts Mg(2+). Lysine 79 is subject to N6-acetyllysine. The residue at position 88 (lysine 88) is an N6-acetyllysine; alternate. Lysine 88 is modified (N6-succinyllysine; alternate). A G2 region spans residues 105 to 109 (GITIN). The tract at residues 126-129 (DCPG) is G3. Residues asparagine 181, aspartate 184, serine 219, alanine 220, and leucine 221 each contribute to the GTP site. Residues 181–184 (NKAD) are G4. Residues 219–221 (SAL) form a G5 region. Lysine 234 is modified (N6-succinyllysine). The residue at position 256 (lysine 256) is an N6-acetyllysine. Threonine 278 is subject to Phosphothreonine. Lysine 286 is modified (N6-succinyllysine). Serine 312 bears the Phosphoserine mark. An N6-acetyllysine mark is found at lysine 361 and lysine 418.

It belongs to the TRAFAC class translation factor GTPase superfamily. Classic translation factor GTPase family. EF-Tu/EF-1A subfamily. In terms of assembly, interacts with NLRX1. Interacts with ATG16L1.

Its subcellular location is the mitochondrion. The catalysed reaction is GTP + H2O = GDP + phosphate + H(+). Its function is as follows. GTP hydrolase that promotes the GTP-dependent binding of aminoacyl-tRNA to the A-site of ribosomes during protein biosynthesis. Also plays a role in the regulation of autophagy and innate immunity. Recruits ATG5-ATG12 and NLRX1 at mitochondria and serves as a checkpoint of the RIGI-MAVS pathway. In turn, inhibits RLR-mediated type I interferon while promoting autophagy. This is Elongation factor Tu, mitochondrial (Tufm) from Mus musculus (Mouse).